A 149-amino-acid chain; its full sequence is Transcriptional repressor NrdR (149 aa).

A zinc finger spans residues 3–34; that stretch reads CPFCSAVDTKVIDSRLVAEGHQVRRRRECLLC. The ATP-cone domain maps to 49 to 139; sequence PRVIKSNGSR…VYRSFEDIRE (91 aa).

Belongs to the NrdR family. Requires Zn(2+) as cofactor.

In terms of biological role, negatively regulates transcription of bacterial ribonucleotide reductase nrd genes and operons by binding to NrdR-boxes. The sequence is that of Transcriptional repressor NrdR from Aeromonas hydrophila subsp. hydrophila (strain ATCC 7966 / DSM 30187 / BCRC 13018 / CCUG 14551 / JCM 1027 / KCTC 2358 / NCIMB 9240 / NCTC 8049).